Reading from the N-terminus, the 263-residue chain is TLC domain-containing protein 4 (263 aa).

4 consecutive transmembrane segments (helical) span residues 7–27 (LLIS…YFVS), 53–73 (VVST…FLFD), 90–110 (VNIA…ILYW), and 124–144 (ASLY…IGNF). The region spanning 44-246 (KKKIEWNSRV…ISKGCIKVIS (203 aa)) is the TLC domain. Lysine 165 carries the N6-acetyllysine modification. Helical transmembrane passes span 173-193 (IVIN…ASML) and 211-231 (LGVL…VMNV).

The protein belongs to the TLCD4 family.

It is found in the membrane. The chain is TLC domain-containing protein 4 from Homo sapiens (Human).